A 403-amino-acid chain; its full sequence is D-mannonate dehydratase CC0532 (403 aa).

Positions 38 and 123 each coordinate substrate. The Proton donor/acceptor role is filled by Y160. Residue D211 participates in Mg(2+) binding. The active-site Proton donor/acceptor is H213. Mg(2+)-binding residues include E237 and E263. Substrate contacts are provided by E263, R284, H313, D317, and E340.

This sequence belongs to the mandelate racemase/muconate lactonizing enzyme family. GalD subfamily. Requires Mg(2+) as cofactor.

The catalysed reaction is D-mannonate = 2-dehydro-3-deoxy-D-gluconate + H2O. It functions in the pathway carbohydrate metabolism; pentose and glucuronate interconversion. In terms of biological role, catalyzes the dehydration of D-mannonate. Has no detectable activity with a panel of 70 other acid sugars (in vitro). This is D-mannonate dehydratase CC0532 from Caulobacter vibrioides (strain ATCC 19089 / CIP 103742 / CB 15) (Caulobacter crescentus).